The primary structure comprises 116 residues: Putative iron-sulfur cluster insertion protein ErpA (116 aa).

3 residues coordinate iron-sulfur cluster: Cys44, Cys108, and Cys110.

Belongs to the HesB/IscA family. As to quaternary structure, homodimer. Iron-sulfur cluster is required as a cofactor.

Required for insertion of 4Fe-4S clusters. The polypeptide is Putative iron-sulfur cluster insertion protein ErpA (Herminiimonas arsenicoxydans).